Reading from the N-terminus, the 366-residue chain is Phenylalanine dehydrogenase (366 aa).

Residue Arg45 coordinates NAD(+). Lys69 is a binding site for L-phenylalanine. The active site involves Lys81. NAD(+) is bound by residues Asp116, Thr151, 181 to 187, 204 to 205, 241 to 242, and 262 to 264; these read GVGKVGE, DI, AK, and SAN. Asn264 contacts L-phenylalanine.

It belongs to the Glu/Leu/Phe/Val dehydrogenases family.

It carries out the reaction L-phenylalanine + NAD(+) + H2O = 3-phenylpyruvate + NH4(+) + NADH + H(+). It functions in the pathway amino-acid biosynthesis; L-phenylalanine biosynthesis; L-phenylalanine from phenylpyruvate (PDH route): step 1/1. In terms of biological role, catalyzes the reversible NAD(+)-dependent oxidative deamination of L-phenylalanine to phenylpyruvate. In Thermoactinomyces intermedius, this protein is Phenylalanine dehydrogenase.